Here is a 523-residue protein sequence, read N- to C-terminus: Calcium and calcium/calmodulin-dependent serine/threonine-protein kinase DMI-3 (523 aa).

Positions 12 to 306 constitute a Protein kinase domain; sequence YEVSEILGRG…ALELLSDPWV (295 aa). Residues 18–26 and K47 contribute to the ATP site; that span reads LGRGGFSVV. The active-site Proton acceptor is the D171. At T271 the chain carries Phosphothreonine. The calmodulin-binding stretch occupies residues 329-342; it reads ARRKLRAAAIASVW. 3 consecutive EF-hand domains span residues 400-435, 436-471, and 478-513; these read SLIP…LKNS, KGED…LPYD, and TEPG…DSSL. Residues D413, N415, D417, T419, E424, D449, D451, S453, C455, E460, D491, N493, D495, K497, and E502 each coordinate Ca(2+).

This sequence belongs to the protein kinase superfamily. CAMK Ser/Thr protein kinase family. CaMK subfamily. As to quaternary structure, interacts with IPD3. In terms of processing, autophosphorylation. As to expression, highly expressed in roots. Expressed in root hairs and nodules. Expressed at low levels in flowers. Not detected in leaves or stems.

The protein localises to the nucleus. It carries out the reaction L-seryl-[protein] + ATP = O-phospho-L-seryl-[protein] + ADP + H(+). The catalysed reaction is L-threonyl-[protein] + ATP = O-phospho-L-threonyl-[protein] + ADP + H(+). Its activity is regulated as follows. Activated by calcium. Autophosphorylation may play an important role in the regulation of the kinase activity. During nodulation, plays a central role in bacterial infection and contributes to nodule organogenesis. Protein kinase that recognizes the calcium spiking induced by Nod factors and translates this signal to components controlling nodulation and mycorrhizal infection responses. May phosphorylate the NSP1 protein. Required in epidermal and cortical cells to promote infection thread (IT) formation in root hairs. In Medicago truncatula (Barrel medic), this protein is Calcium and calcium/calmodulin-dependent serine/threonine-protein kinase DMI-3.